The primary structure comprises 772 residues: Protein U58 (772 aa).

It belongs to the herpesviridae UL87 family.

This chain is Protein U58 (U58), found in Homo sapiens (Human).